The sequence spans 416 residues: Geranyl diphosphate synthase (416 aa).

Mg(2+) contacts are provided by Asp-157 and Asp-161. The short motif at 157–161 (DDIMD) is the DDXXD motif element.

The protein belongs to the FPP/GGPP synthase family. It depends on Mg(2+) as a cofactor. In terms of tissue distribution, specifically expressed in the anterior midgut of male beetles, the site of aggregation pheromone biosynthesis.

The catalysed reaction is isopentenyl diphosphate + dimethylallyl diphosphate = (2E)-geranyl diphosphate + diphosphate. Its pathway is pheromone biosynthesis. Functionally, geranyl diphosphate synthase involved in pheromone biosynthesis. This is Geranyl diphosphate synthase from Ips pini (Pine engraver beetle).